A 161-amino-acid polypeptide reads, in one-letter code: Type II secretion system protein M (161 aa).

Residues 1 to 16 (MNELRRRWQVMSQRER) are Cytoplasmic-facing. A helical transmembrane segment spans residues 17–37 (LMALACGGLVVLCLLYYLIWA). Topologically, residues 38 to 161 (PWQESVRQWQ…VTRLSLERVL (124 aa)) are periplasmic.

Belongs to the GSP M family. In terms of assembly, type II secretion system is composed of four main components: the outer membrane complex, the inner membrane complex, the cytoplasmic secretion ATPase and the periplasm-spanning pseudopilus. Forms homodimers. Interacts with OutL/GspL. Interacts with OutE/GspE and OutF/GspF.

Its subcellular location is the cell inner membrane. Inner membrane component of the type II secretion system required for the energy-dependent secretion of extracellular factors such as proteases and toxins from the periplasm. Plays a role in the complex assembly and recruits OutL resulting in a stable complex in the inner membrane. Provides thus a link between the energy-providing OutE protein in the cytoplasm and the rest of the T2SS machinery. The chain is Type II secretion system protein M (outM) from Dickeya chrysanthemi (Pectobacterium chrysanthemi).